Reading from the N-terminus, the 1076-residue chain is Carbamoyl phosphate synthase large chain (1076 aa).

The carboxyphosphate synthetic domain stretch occupies residues Met1–Glu403. ATP-binding residues include Arg129, Arg169, Gly175, Gly176, Glu208, Leu210, Glu215, Gly241, Ile242, His243, Gln285, and Glu299. The 196-residue stretch at Asp133–Val328 folds into the ATP-grasp 1 domain. 3 residues coordinate Mg(2+): Gln285, Glu299, and Asn301. Gln285, Glu299, and Asn301 together coordinate Mn(2+). The interval Val404–Ala553 is oligomerization domain. Residues Asn554–Gly935 are carbamoyl phosphate synthetic domain. In terms of domain architecture, ATP-grasp 2 spans Gln678–Val869. Residues Arg714, Arg753, Leu755, Glu760, Gly785, Val786, His787, Ser788, Gln828, and Glu840 each coordinate ATP. Mg(2+) is bound by residues Gln828, Glu840, and Asn842. Gln828, Glu840, and Asn842 together coordinate Mn(2+). The region spanning Ser936–Ala1076 is the MGS-like domain. Residues Ser936–Ala1076 form an allosteric domain region.

The protein belongs to the CarB family. As to quaternary structure, composed of two chains; the small (or glutamine) chain promotes the hydrolysis of glutamine to ammonia, which is used by the large (or ammonia) chain to synthesize carbamoyl phosphate. Tetramer of heterodimers (alpha,beta)4. Mg(2+) is required as a cofactor. Requires Mn(2+) as cofactor.

The catalysed reaction is hydrogencarbonate + L-glutamine + 2 ATP + H2O = carbamoyl phosphate + L-glutamate + 2 ADP + phosphate + 2 H(+). It catalyses the reaction hydrogencarbonate + NH4(+) + 2 ATP = carbamoyl phosphate + 2 ADP + phosphate + 2 H(+). It functions in the pathway amino-acid biosynthesis; L-arginine biosynthesis; carbamoyl phosphate from bicarbonate: step 1/1. The protein operates within pyrimidine metabolism; UMP biosynthesis via de novo pathway; (S)-dihydroorotate from bicarbonate: step 1/3. Large subunit of the glutamine-dependent carbamoyl phosphate synthetase (CPSase). CPSase catalyzes the formation of carbamoyl phosphate from the ammonia moiety of glutamine, carbonate, and phosphate donated by ATP, constituting the first step of 2 biosynthetic pathways, one leading to arginine and/or urea and the other to pyrimidine nucleotides. The large subunit (synthetase) binds the substrates ammonia (free or transferred from glutamine from the small subunit), hydrogencarbonate and ATP and carries out an ATP-coupled ligase reaction, activating hydrogencarbonate by forming carboxy phosphate which reacts with ammonia to form carbamoyl phosphate. The chain is Carbamoyl phosphate synthase large chain from Vibrio cholerae serotype O1 (strain ATCC 39315 / El Tor Inaba N16961).